Reading from the N-terminus, the 161-residue chain is Peptidyl-prolyl cis-trans isomerase (161 aa).

A PPIase cyclophilin-type domain is found at 6 to 160 (FFDIKAGDER…KKIIIEDCGE (155 aa)).

This sequence belongs to the cyclophilin-type PPIase family. PPIase A subfamily. Found mainly in the tegument, gut epithelium, and muscle layers. Also found in the interior of the parasite.

The catalysed reaction is [protein]-peptidylproline (omega=180) = [protein]-peptidylproline (omega=0). Its activity is regulated as follows. Binds cyclosporin A (CsA). CsA mediates some of its effects via an inhibitory action on PPIase. In terms of biological role, PPIases accelerate the folding of proteins. It catalyzes the cis-trans isomerization of proline imidic peptide bonds in oligopeptides. The chain is Peptidyl-prolyl cis-trans isomerase from Schistosoma mansoni (Blood fluke).